A 651-amino-acid polypeptide reads, in one-letter code: Probable replication restart protein PriA (651 aa).

Positions 371, 374, 380, 383, 399, 402, 411, and 414 each coordinate Zn(2+).

This sequence belongs to the helicase family. PriA subfamily. In terms of assembly, component of the replication restart primosome. The cofactor is Zn(2+).

Initiates the restart of stalled replication forks, which reloads the replicative helicase on sites other than the origin of replication. Recognizes and binds to abandoned replication forks and remodels them to uncover a helicase loading site. Promotes assembly of the primosome at these replication forks. In Mycobacterium leprae (strain TN), this protein is Probable replication restart protein PriA.